Reading from the N-terminus, the 346-residue chain is Flap endonuclease 1 (346 aa).

The N-domain stretch occupies residues 1–102 (MGVTELGKLI…AEIEERRKAK (102 aa)). D31, D84, E156, E158, D177, D179, and D239 together coordinate Mg(2+). Residues 120 to 261 (EVAKYAKRAI…RALKLIWEFG (142 aa)) are I-domain.

This sequence belongs to the XPG/RAD2 endonuclease family. FEN1 subfamily. As to quaternary structure, interacts with PCNA. PCNA stimulates the nuclease activity without altering cleavage specificity. Requires Mg(2+) as cofactor.

In terms of biological role, structure-specific nuclease with 5'-flap endonuclease and 5'-3' exonuclease activities involved in DNA replication and repair. During DNA replication, cleaves the 5'-overhanging flap structure that is generated by displacement synthesis when DNA polymerase encounters the 5'-end of a downstream Okazaki fragment. Binds the unpaired 3'-DNA end and kinks the DNA to facilitate 5' cleavage specificity. Cleaves one nucleotide into the double-stranded DNA from the junction in flap DNA, leaving a nick for ligation. Also involved in the base excision repair (BER) pathway. Acts as a genome stabilization factor that prevents flaps from equilibrating into structures that lead to duplications and deletions. Also possesses 5'-3' exonuclease activity on nicked or gapped double-stranded DNA. In Pyrobaculum arsenaticum (strain DSM 13514 / JCM 11321 / PZ6), this protein is Flap endonuclease 1.